The primary structure comprises 353 residues: Phenol hydroxylase P5 protein (353 aa).

The 2Fe-2S ferredoxin-type domain occupies 3-93 (YQVTIEPIGT…DMVIEADVDE (91 aa)). [2Fe-2S] cluster contacts are provided by cysteine 37, cysteine 42, cysteine 45, and cysteine 77. Residues 102–201 (VQDYQATVIE…SGPYGQFFVR (100 aa)) enclose the FAD-binding FR-type domain.

The multicomponent enzyme phenol hydroxylase is formed by P0, P1, P2, P3, P4 and P5 polypeptides. Requires FAD as cofactor. [2Fe-2S] cluster is required as a cofactor.

It catalyses the reaction phenol + NADPH + O2 + H(+) = catechol + NADP(+) + H2O. It functions in the pathway aromatic compound metabolism; phenol degradation. Functionally, catabolizes phenol, and some of its methylated derivatives. P5 is required for growth on phenol, and for in vitro phenol hydroxylase activity. Its function is as follows. Probable electron transfer from NADPH, via FAD and the 2Fe-2S center, to the oxygenase activity site of the enzyme. The chain is Phenol hydroxylase P5 protein (mphP) from Acinetobacter pittii (strain PHEA-2).